A 202-amino-acid chain; its full sequence is Na(+)-translocating NADH-quinone reductase subunit E (202 aa).

A run of 6 helical transmembrane segments spans residues 11 to 31 (SIFLENMALFYFLGMCTFLAV), 39 to 59 (MGLGVAVIVVLTISVPVNQLV), 79 to 99 (LSFLSFLTFIGVIAALVQILE), 114 to 134 (GIFLPLITVNCAIFGGVAFAV), 144 to 164 (IFYGAGSGAGWALAITLLAAV), and 180 to 200 (LGSVFMIAGLMALGFQSFSGV).

Belongs to the NqrDE/RnfAE family. As to quaternary structure, composed of six subunits; NqrA, NqrB, NqrC, NqrD, NqrE and NqrF.

It is found in the cell inner membrane. The enzyme catalyses a ubiquinone + n Na(+)(in) + NADH + H(+) = a ubiquinol + n Na(+)(out) + NAD(+). NQR complex catalyzes the reduction of ubiquinone-1 to ubiquinol by two successive reactions, coupled with the transport of Na(+) ions from the cytoplasm to the periplasm. NqrA to NqrE are probably involved in the second step, the conversion of ubisemiquinone to ubiquinol. In Pseudoalteromonas atlantica (strain T6c / ATCC BAA-1087), this protein is Na(+)-translocating NADH-quinone reductase subunit E.